A 172-amino-acid polypeptide reads, in one-letter code: Regulator of hemoglobinization and erythroid cell expansion protein (172 aa).

Residues W9–I29 traverse the membrane as a helical segment. The tract at residues V52–Q106 is disordered. Residues A64–D89 show a composition bias toward basic and acidic residues. Low complexity predominate over residues P91–P103. A phosphotyrosine mark is found at Y132 and Y141.

In terms of assembly, interacts with EPOR; this interaction occurs in a erythropoietin (EPO)-dependent manner. Interacts with JAK2; this interaction occurs in a erythropoietin (EPO)-dependent manner. Interacts (via tyrosine-phosphorylated form) with GRB2. Phosphorylated. Phosphorylation on Tyr-132 and Tyr-141 occurs in a erythropoietin (EPO)-dependent manner. As to expression, expressed in the proerythroblasts (at protein level). Expressed strongly in the kidney. Expressed weakly in the pancreas, liver and lung. Expressed strongly in erythroid progenitor cells (EPCs). Expressed weakly in T-cells and neutrophils.

The protein localises to the cell membrane. Functionally, acts as a signaling transduction factor of the EPO-EPOR signaling pathway promoting erythroid cell differentiation. In Homo sapiens (Human), this protein is Regulator of hemoglobinization and erythroid cell expansion protein.